Here is an 867-residue protein sequence, read N- to C-terminus: uncharacterized protein (867 aa).

The segment at residues 76 to 108 (CDFCRQKKIRCDMDQSPRPGNACINCRKHHLDC) is a DNA-binding region (zn(2)-C6 fungal-type). Disordered regions lie at residues 110 to 167 (FTRT…ITPV) and 217 to 257 (PQLA…NSNL). Composition is skewed to polar residues over residues 137–167 (SAKS…ITPV) and 248–257 (SISSYTNSNL).

The protein resides in the nucleus. This is an uncharacterized protein from Schizosaccharomyces pombe (strain 972 / ATCC 24843) (Fission yeast).